The sequence spans 318 residues: Holliday junction branch migration complex subunit RuvB (318 aa).

The interval 1-168 (MPENLEIRPS…FGYVAKIVDY (168 aa)) is large ATPase domain (RuvB-L). The ATP site is built by isoleucine 7, arginine 8, glycine 49, lysine 52, threonine 53, threonine 54, arginine 158, tyrosine 168, and arginine 205. Residue threonine 53 coordinates Mg(2+). The tract at residues 169–239 (TLEDMIQIIR…IVNKTFDSIG (71 aa)) is small ATPAse domain (RuvB-S). A head domain (RuvB-H) region spans residues 242-318 (NQGLSQINIE…RDYLLELKTN (77 aa)). Positions 278, 297, and 302 each coordinate DNA.

This sequence belongs to the RuvB family. As to quaternary structure, homohexamer. Forms an RuvA(8)-RuvB(12)-Holliday junction (HJ) complex. HJ DNA is sandwiched between 2 RuvA tetramers; dsDNA enters through RuvA and exits via RuvB. An RuvB hexamer assembles on each DNA strand where it exits the tetramer. Each RuvB hexamer is contacted by two RuvA subunits (via domain III) on 2 adjacent RuvB subunits; this complex drives branch migration. In the full resolvosome a probable DNA-RuvA(4)-RuvB(12)-RuvC(2) complex forms which resolves the HJ.

The protein localises to the cytoplasm. The enzyme catalyses ATP + H2O = ADP + phosphate + H(+). Functionally, the RuvA-RuvB-RuvC complex processes Holliday junction (HJ) DNA during genetic recombination and DNA repair, while the RuvA-RuvB complex plays an important role in the rescue of blocked DNA replication forks via replication fork reversal (RFR). RuvA specifically binds to HJ cruciform DNA, conferring on it an open structure. The RuvB hexamer acts as an ATP-dependent pump, pulling dsDNA into and through the RuvAB complex. RuvB forms 2 homohexamers on either side of HJ DNA bound by 1 or 2 RuvA tetramers; 4 subunits per hexamer contact DNA at a time. Coordinated motions by a converter formed by DNA-disengaged RuvB subunits stimulates ATP hydrolysis and nucleotide exchange. Immobilization of the converter enables RuvB to convert the ATP-contained energy into a lever motion, pulling 2 nucleotides of DNA out of the RuvA tetramer per ATP hydrolyzed, thus driving DNA branch migration. The RuvB motors rotate together with the DNA substrate, which together with the progressing nucleotide cycle form the mechanistic basis for DNA recombination by continuous HJ branch migration. Branch migration allows RuvC to scan DNA until it finds its consensus sequence, where it cleaves and resolves cruciform DNA. The protein is Holliday junction branch migration complex subunit RuvB of Mesomycoplasma hyopneumoniae (strain 232) (Mycoplasma hyopneumoniae).